The following is a 465-amino-acid chain: Spermidine/putrescine import ATP-binding protein PotA (465 aa).

The span at 1–18 shows a compositional bias: polar residues; that stretch reads MTATSGARTSDARTSGAR. The tract at residues 1-21 is disordered; that stretch reads MTATSGARTSDARTSGARTSD. One can recognise an ABC transporter domain in the interval 30 to 264; the sequence is IELVGVAKDY…PRTRFVAGFI (235 aa). 66 to 73 serves as a coordination point for ATP; sequence GPSGCGKS.

This sequence belongs to the ABC transporter superfamily. Spermidine/putrescine importer (TC 3.A.1.11.1) family. In terms of assembly, the complex is composed of two ATP-binding proteins (PotA), two transmembrane proteins (PotB and PotC) and a solute-binding protein (PotD).

The protein localises to the cell membrane. The enzyme catalyses ATP + H2O + polyamine-[polyamine-binding protein]Side 1 = ADP + phosphate + polyamineSide 2 + [polyamine-binding protein]Side 1.. Its function is as follows. Part of the ABC transporter complex PotABCD involved in spermidine/putrescine import. Responsible for energy coupling to the transport system. The sequence is that of Spermidine/putrescine import ATP-binding protein PotA from Frankia alni (strain DSM 45986 / CECT 9034 / ACN14a).